Here is a 164-residue protein sequence, read N- to C-terminus: Putative 4-hydroxy-4-methyl-2-oxoglutarate aldolase (164 aa).

Substrate-binding positions include 80–83 and Arg-102; that span reads GGNL. A divalent metal cation is bound at residue Asp-103.

This sequence belongs to the class II aldolase/RraA-like family. As to quaternary structure, homotrimer. Requires a divalent metal cation as cofactor.

It carries out the reaction 4-hydroxy-4-methyl-2-oxoglutarate = 2 pyruvate. The catalysed reaction is oxaloacetate + H(+) = pyruvate + CO2. Functionally, catalyzes the aldol cleavage of 4-hydroxy-4-methyl-2-oxoglutarate (HMG) into 2 molecules of pyruvate. Also contains a secondary oxaloacetate (OAA) decarboxylase activity due to the common pyruvate enolate transition state formed following C-C bond cleavage in the retro-aldol and decarboxylation reactions. This is Putative 4-hydroxy-4-methyl-2-oxoglutarate aldolase from Paraburkholderia phymatum (strain DSM 17167 / CIP 108236 / LMG 21445 / STM815) (Burkholderia phymatum).